Here is a 381-residue protein sequence, read N- to C-terminus: UDP-N-acetylglucosamine--N-acetylmuramyl-(pentapeptide) pyrophosphoryl-undecaprenol N-acetylglucosamine transferase (381 aa).

Residues Thr-10–Gly-12, Asn-124, Arg-165, Ser-190, Ile-245, and Gln-290 contribute to the UDP-N-acetyl-alpha-D-glucosamine site. The interval Trp-361–Ala-381 is disordered.

Belongs to the glycosyltransferase 28 family. MurG subfamily.

Its subcellular location is the cell inner membrane. It carries out the reaction di-trans,octa-cis-undecaprenyl diphospho-N-acetyl-alpha-D-muramoyl-L-alanyl-D-glutamyl-meso-2,6-diaminopimeloyl-D-alanyl-D-alanine + UDP-N-acetyl-alpha-D-glucosamine = di-trans,octa-cis-undecaprenyl diphospho-[N-acetyl-alpha-D-glucosaminyl-(1-&gt;4)]-N-acetyl-alpha-D-muramoyl-L-alanyl-D-glutamyl-meso-2,6-diaminopimeloyl-D-alanyl-D-alanine + UDP + H(+). It participates in cell wall biogenesis; peptidoglycan biosynthesis. In terms of biological role, cell wall formation. Catalyzes the transfer of a GlcNAc subunit on undecaprenyl-pyrophosphoryl-MurNAc-pentapeptide (lipid intermediate I) to form undecaprenyl-pyrophosphoryl-MurNAc-(pentapeptide)GlcNAc (lipid intermediate II). In Anaeromyxobacter sp. (strain Fw109-5), this protein is UDP-N-acetylglucosamine--N-acetylmuramyl-(pentapeptide) pyrophosphoryl-undecaprenol N-acetylglucosamine transferase.